Reading from the N-terminus, the 325-residue chain is Tetraacyldisaccharide 4'-kinase (325 aa).

Position 53–60 (53–60 (SVGGNGKT)) interacts with ATP.

Belongs to the LpxK family.

The enzyme catalyses a lipid A disaccharide + ATP = a lipid IVA + ADP + H(+). It participates in glycolipid biosynthesis; lipid IV(A) biosynthesis; lipid IV(A) from (3R)-3-hydroxytetradecanoyl-[acyl-carrier-protein] and UDP-N-acetyl-alpha-D-glucosamine: step 6/6. Its function is as follows. Transfers the gamma-phosphate of ATP to the 4'-position of a tetraacyldisaccharide 1-phosphate intermediate (termed DS-1-P) to form tetraacyldisaccharide 1,4'-bis-phosphate (lipid IVA). This chain is Tetraacyldisaccharide 4'-kinase, found in Mannheimia succiniciproducens (strain KCTC 0769BP / MBEL55E).